The primary structure comprises 161 residues: Transcriptional regulator MraZ (161 aa).

SpoVT-AbrB domains lie at 7 to 69 and 98 to 141; these read KELH…EPDV and LDVV…EPER.

The protein belongs to the MraZ family. In terms of assembly, forms oligomers.

The protein localises to the cytoplasm. It localises to the nucleoid. The sequence is that of Transcriptional regulator MraZ from Chlorobium limicola (strain DSM 245 / NBRC 103803 / 6330).